A 131-amino-acid chain; its full sequence is Histone H2A type 1-A (131 aa).

The segment at 1–23 (MSGRGKQGGKARAKSKSRSSRAG) is disordered. The residue at position 2 (serine 2) is an N-acetylserine. Phosphoserine; by RPS6KA5 is present on serine 2. Arginine 4 bears the Citrulline; alternate mark. Arginine 4 bears the Symmetric dimethylarginine; by PRMT5; alternate mark. An N6-(2-hydroxyisobutyryl)lysine modification is found at lysine 6. A compositionally biased stretch (basic residues) spans 7–19 (QGGKARAKSKSRS). N6-(2-hydroxyisobutyryl)lysine; alternate is present on lysine 10. Lysine 10 bears the N6-(beta-hydroxybutyryl)lysine; alternate mark. An N6-lactoyllysine; alternate modification is found at lysine 10. Residue lysine 10 is modified to N6-succinyllysine; alternate. Position 14 is an N6-(beta-hydroxybutyryl)lysine (lysine 14). Glycyl lysine isopeptide (Lys-Gly) (interchain with G-Cter in ubiquitin) cross-links involve residues lysine 14 and lysine 16. Residue lysine 37 is modified to N6-(2-hydroxyisobutyryl)lysine; alternate. N6-(beta-hydroxybutyryl)lysine; alternate is present on lysine 37. Residue lysine 37 is modified to N6-crotonyllysine; alternate. Residues lysine 75 and lysine 76 each carry the N6-(2-hydroxyisobutyryl)lysine modification. Position 96 is an N6-(2-hydroxyisobutyryl)lysine; alternate (lysine 96). Lysine 96 is modified (N6-(beta-hydroxybutyryl)lysine; alternate). An N6-succinyllysine; alternate modification is found at lysine 96. N6-glutaryllysine; alternate is present on lysine 96. Glutamine 105 carries the post-translational modification N5-methylglutamine. Lysine 119 carries the post-translational modification N6-(2-hydroxyisobutyryl)lysine; alternate. Lysine 119 bears the N6-(beta-hydroxybutyryl)lysine; alternate mark. N6-crotonyllysine; alternate is present on residues lysine 119 and lysine 120. Residues lysine 119 and lysine 120 each carry the N6-glutaryllysine; alternate modification. Residue lysine 120 forms a Glycyl lysine isopeptide (Lys-Gly) (interchain with G-Cter in ubiquitin); alternate linkage. Threonine 121 carries the phosphothreonine; by DCAF1 modification. Lysine 127 carries the N6-crotonyllysine modification.

Belongs to the histone H2A family. In terms of assembly, the nucleosome is a histone octamer containing two molecules each of H2A, H2B, H3 and H4 assembled in one H3-H4 heterotetramer and two H2A-H2B heterodimers. The octamer wraps approximately 147 bp of DNA. Deiminated on Arg-4 in granulocytes upon calcium entry. In terms of processing, monoubiquitination of Lys-120 (H2AK119Ub) by RING1, TRIM37 and RNF2/RING2 complex gives a specific tag for epigenetic transcriptional repression and participates in X chromosome inactivation of female mammals. It is involved in the initiation of both imprinted and random X inactivation. Ubiquitinated H2A is enriched in inactive X chromosome chromatin. Ubiquitination of H2A functions downstream of methylation of 'Lys-27' of histone H3 (H3K27me). H2AK119Ub by RNF2/RING2 can also be induced by ultraviolet and may be involved in DNA repair. Monoubiquitination of Lys-120 (H2AK119Ub) by TRIM37 may promote transformation of cells in a number of breast cancers. Following DNA double-strand breaks (DSBs), it is ubiquitinated through 'Lys-63' linkage of ubiquitin moieties by the E2 ligase UBE2N and the E3 ligases RNF8 and RNF168, leading to the recruitment of repair proteins to sites of DNA damage. Ubiquitination at Lys-14 and Lys-16 (H2AK13Ub and H2AK15Ub, respectively) in response to DNA damage is initiated by RNF168 that mediates monoubiquitination at these 2 sites, and 'Lys-63'-linked ubiquitin are then conjugated to monoubiquitin; RNF8 is able to extend 'Lys-63'-linked ubiquitin chains in vitro. Deubiquitinated by USP51 at Lys-14 and Lys-16 (H2AK13Ub and H2AK15Ub, respectively) after damaged DNA is repaired. H2AK119Ub and ionizing radiation-induced 'Lys-63'-linked ubiquitination (H2AK13Ub and H2AK15Ub) are distinct events. Post-translationally, phosphorylation on Ser-2 (H2AS1ph) is enhanced during mitosis. Phosphorylation on Ser-2 by RPS6KA5/MSK1 directly represses transcription. Acetylation of H3 inhibits Ser-2 phosphorylation by RPS6KA5/MSK1. Phosphorylation at Thr-121 (H2AT120ph) by DCAF1 is present in the regulatory region of many tumor suppresor genes and down-regulates their transcription. Glutamine methylation at Gln-105 (H2AQ104me) by FBL is specifically dedicated to polymerase I. It is present at 35S ribosomal DNA locus and impairs binding of the FACT complex. In terms of processing, symmetric dimethylation on Arg-4 by the PRDM1/PRMT5 complex may play a crucial role in the germ-cell lineage. Post-translationally, crotonylation (Kcr) is specifically present in male germ cells and marks testis-specific genes in post-meiotic cells, including X-linked genes that escape sex chromosome inactivation in haploid cells. Crotonylation marks active promoters and enhancers and confers resistance to transcriptional repressors. It is also associated with post-meiotically activated genes on autosomes. Lactylated in macrophages by EP300/P300 by using lactoyl-CoA directly derived from endogenous or exogenous lactate, leading to stimulates gene transcription.

Its subcellular location is the nucleus. The protein resides in the chromosome. In terms of biological role, core component of nucleosome. Nucleosomes wrap and compact DNA into chromatin, limiting DNA accessibility to the cellular machineries which require DNA as a template. Histones thereby play a central role in transcription regulation, DNA repair, DNA replication and chromosomal stability. DNA accessibility is regulated via a complex set of post-translational modifications of histones, also called histone code, and nucleosome remodeling. In Homo sapiens (Human), this protein is Histone H2A type 1-A.